Reading from the N-terminus, the 435-residue chain is T-box transcription factor T (435 aa).

Positions 51–219 form a DNA-binding region, T-box; the sequence is LWLRFKELTN…YNPFAKAFLD (169 aa). Residues 279–308 form a disordered region; the sequence is YPTLRSHRSSPYPSPYAHRNNSPTYSDNSP. Over residues 297–308 the composition is skewed to polar residues; sequence RNNSPTYSDNSP.

In terms of assembly, monomer. Detected in testis, but not in other, normal tissues. Detected in lung tumors (at protein level).

The protein localises to the nucleus. In terms of biological role, involved in the transcriptional regulation of genes required for mesoderm formation and differentiation. Binds to a palindromic T site 5'-TTCACACCTAGGTGTGAA-3' DNA sequence and activates gene transcription when bound to such a site. This chain is T-box transcription factor T, found in Homo sapiens (Human).